Reading from the N-terminus, the 200-residue chain is LexA repressor (200 aa).

The segment at residues 28-48 is a DNA-binding region (H-T-H motif); it reads RAEIAEILGFKSANAAEEHLK. Catalysis depends on for autocatalytic cleavage activity residues Ser118 and Lys155.

It belongs to the peptidase S24 family. As to quaternary structure, homodimer.

It carries out the reaction Hydrolysis of Ala-|-Gly bond in repressor LexA.. Its function is as follows. Represses a number of genes involved in the response to DNA damage (SOS response), including recA and lexA. In the presence of single-stranded DNA, RecA interacts with LexA causing an autocatalytic cleavage which disrupts the DNA-binding part of LexA, leading to derepression of the SOS regulon and eventually DNA repair. In Teredinibacter turnerae (strain ATCC 39867 / T7901), this protein is LexA repressor.